The following is a 218-amino-acid chain: Adenylate kinase (218 aa).

10-15 (GVGKGT) contributes to the ATP binding site. Residues 30 to 59 (STGDMLRSAIKQGTELGLKAKSFIDKGELV) form an NMP region. Residues T31, R36, 57–59 (ELV), 86–89 (GFPR), and Q93 each bind AMP. Residues 127–164 (GRRIAPSTGKVYHVVYNPPKVEGKCDETGEDLIIREDD) are LID. ATP is bound by residues R128 and 137–138 (VY). Residues R161 and R172 each contribute to the AMP site. An ATP-binding site is contributed by Q200.

This sequence belongs to the adenylate kinase family. Monomer.

The protein localises to the cytoplasm. It carries out the reaction AMP + ATP = 2 ADP. The protein operates within purine metabolism; AMP biosynthesis via salvage pathway; AMP from ADP: step 1/1. Its function is as follows. Catalyzes the reversible transfer of the terminal phosphate group between ATP and AMP. Plays an important role in cellular energy homeostasis and in adenine nucleotide metabolism. The protein is Adenylate kinase of Chloroherpeton thalassium (strain ATCC 35110 / GB-78).